A 187-amino-acid polypeptide reads, in one-letter code: Protein canopy-1 (187 aa).

Residues 1–24 form the signal peptide; sequence MSPWIKHICLVLVAAFMLVKTTES. Residues 28-181 form the Saposin B-type domain; the sequence is EALYCSACMA…EVSDHCKSSV (154 aa). Intrachain disulfides connect C32–C177, C35–C170, and C90–C143. Residues 184 to 187 carry the Prevents secretion from ER motif; sequence HSEL.

This sequence belongs to the canopy family. As to quaternary structure, homodimer. Interacts with fgfr1.

Its subcellular location is the endoplasmic reticulum. In terms of biological role, involved in the maintenance of the midbrain-hindbrain boundary (MHB) organizer. Contributes to a positive-feedback loop of FGF signaling in the MHB, enabling the MHB to exert its role as an organizer for the tectal and cerebellar development. This chain is Protein canopy-1 (cnpy1), found in Danio rerio (Zebrafish).